Here is a 114-residue protein sequence, read N- to C-terminus: Large ribosomal subunit protein bL17 (114 aa).

This sequence belongs to the bacterial ribosomal protein bL17 family. In terms of assembly, part of the 50S ribosomal subunit. Contacts protein L32.

This Elusimicrobium minutum (strain Pei191) protein is Large ribosomal subunit protein bL17.